Consider the following 185-residue polypeptide: Ribosome-recycling factor (185 aa).

The protein belongs to the RRF family.

It is found in the cytoplasm. Responsible for the release of ribosomes from messenger RNA at the termination of protein biosynthesis. May increase the efficiency of translation by recycling ribosomes from one round of translation to another. This Saccharopolyspora erythraea (strain ATCC 11635 / DSM 40517 / JCM 4748 / NBRC 13426 / NCIMB 8594 / NRRL 2338) protein is Ribosome-recycling factor.